The sequence spans 383 residues: Soluble hydrogenase 42 kDa subunit (383 aa).

Residue K194 is modified to N6-(pyridoxal phosphate)lysine.

It belongs to the class-V pyridoxal-phosphate-dependent aminotransferase family. As to quaternary structure, heterodimer of a large and a small subunit. It depends on pyridoxal 5'-phosphate as a cofactor.

The protein localises to the cytoplasm. Soluble hydrogenase catalyzes both production and consumption of hydrogen from suitable artificial electron donors or acceptors. This subunit catalyzes the tritium-exchange activity. This is Soluble hydrogenase 42 kDa subunit from Anabaena cylindrica.